The sequence spans 272 residues: Shikimate dehydrogenase (NADP(+)) (272 aa).

Shikimate-binding positions include 14–16 (SKS) and threonine 61. Residue lysine 65 is the Proton acceptor of the active site. Glutamate 77 is an NADP(+) binding site. The shikimate site is built by asparagine 86 and aspartate 102. NADP(+)-binding positions include 126 to 130 (GAGGA), 149 to 154 (NRTVFR), and methionine 213. Tyrosine 215 lines the shikimate pocket. Glycine 237 provides a ligand contact to NADP(+).

Belongs to the shikimate dehydrogenase family. Homodimer.

The catalysed reaction is shikimate + NADP(+) = 3-dehydroshikimate + NADPH + H(+). Its pathway is metabolic intermediate biosynthesis; chorismate biosynthesis; chorismate from D-erythrose 4-phosphate and phosphoenolpyruvate: step 4/7. Functionally, involved in the biosynthesis of the chorismate, which leads to the biosynthesis of aromatic amino acids. Catalyzes the reversible NADPH linked reduction of 3-dehydroshikimate (DHSA) to yield shikimate (SA). The protein is Shikimate dehydrogenase (NADP(+)) of Escherichia coli O127:H6 (strain E2348/69 / EPEC).